The primary structure comprises 398 residues: G2/mitotic-specific cyclin-B2 (398 aa).

Residue Thr-8 is modified to Phosphothreonine. Phosphoserine occurs at positions 11, 77, and 92. Thr-94 is subject to Phosphothreonine. Residues Ser-99, Ser-392, and Ser-398 each carry the phosphoserine modification.

It belongs to the cyclin family. Cyclin AB subfamily. Interacts with the CDK1 protein kinase to form a serine/threonine kinase holoenzyme complex also known as maturation promoting factor (MPF). The cyclin subunit imparts substrate specificity to the complex.

Essential for the control of the cell cycle at the G2/M (mitosis) transition. The chain is G2/mitotic-specific cyclin-B2 (CCNB2) from Macaca fascicularis (Crab-eating macaque).